Reading from the N-terminus, the 580-residue chain is Netrin-3 (580 aa).

The N-terminal stretch at 1-27 (MPGWPWGLLLTAGTLFAALSPGPPAPA) is a signal peptide. The 219-residue stretch at 36 to 254 (APRGCVPGLV…AATDLQVGGR (219 aa)) folds into the Laminin N-terminal domain. The interval 62–83 (PATRACDASDPRRAHSPALLTS) is disordered. 15 cysteine pairs are disulfide-bonded: Cys92–Cys125, Cys255–Cys264, Cys257–Cys274, Cys276–Cys285, Cys288–Cys308, Cys311–Cys320, Cys313–Cys338, Cys341–Cys350, Cys353–Cys371, Cys374–Cys386, Cys376–Cys393, Cys395–Cys404, Cys407–Cys421, Cys441–Cys514, and Cys460–Cys577. The N-linked (GlcNAc...) asparagine glycan is linked to Asn104. 3 Laminin EGF-like domains span residues 255–308 (CKCN…SHAC), 311–371 (CSCN…RRAC), and 374–421 (CDCH…VAPC). The N-linked (GlcNAc...) asparagine glycan is linked to Asn387. In terms of domain architecture, NTR spans 441–577 (CDSHCKPARG…LQRRERRGRC (137 aa)). The Cell attachment site; atypical motif lies at 500–502 (RGS).

As to expression, spinal cord.

The protein localises to the secreted. It is found in the extracellular space. It localises to the extracellular matrix. Functionally, netrins control guidance of CNS commissural axons and peripheral motor axons. This is Netrin-3 (NTN3) from Homo sapiens (Human).